Consider the following 480-residue polypeptide: Glutamate--tRNA ligase (480 aa).

The 'HIGH' region signature appears at 12–22; it reads PSPTGAPHLGL. A 'KMSKS' region motif is present at residues 255–259; the sequence is KLSKR. K258 serves as a coordination point for ATP.

This sequence belongs to the class-I aminoacyl-tRNA synthetase family. Glutamate--tRNA ligase type 1 subfamily. In terms of assembly, monomer.

The protein localises to the cytoplasm. The catalysed reaction is tRNA(Glu) + L-glutamate + ATP = L-glutamyl-tRNA(Glu) + AMP + diphosphate. Catalyzes the attachment of glutamate to tRNA(Glu) in a two-step reaction: glutamate is first activated by ATP to form Glu-AMP and then transferred to the acceptor end of tRNA(Glu). This is Glutamate--tRNA ligase from Tropheryma whipplei (strain TW08/27) (Whipple's bacillus).